A 274-amino-acid chain; its full sequence is Small ribosomal subunit biogenesis GTPase RsgA (274 aa).

Residues 58–215 (KNYLNRPKVA…LVDSPGFSIY (158 aa)) form the CP-type G domain. GTP contacts are provided by residues 108–111 (SKLD) and 158–166 (GHSGVGKST). Zn(2+) contacts are provided by Cys238, Cys243, His245, and Cys252.

This sequence belongs to the TRAFAC class YlqF/YawG GTPase family. RsgA subfamily. As to quaternary structure, monomer. Associates with 30S ribosomal subunit, binds 16S rRNA. Zn(2+) serves as cofactor.

The protein localises to the cytoplasm. Its function is as follows. One of several proteins that assist in the late maturation steps of the functional core of the 30S ribosomal subunit. Helps release RbfA from mature subunits. May play a role in the assembly of ribosomal proteins into the subunit. Circularly permuted GTPase that catalyzes slow GTP hydrolysis, GTPase activity is stimulated by the 30S ribosomal subunit. This chain is Small ribosomal subunit biogenesis GTPase RsgA, found in Mycoplasmoides gallisepticum (strain R(low / passage 15 / clone 2)) (Mycoplasma gallisepticum).